Reading from the N-terminus, the 341-residue chain is Glycerol-3-phosphate dehydrogenase [NAD(P)+] (341 aa).

S14, F15, R35, and K108 together coordinate NADPH. Sn-glycerol 3-phosphate-binding residues include K108 and G136. An NADPH-binding site is contributed by A140. K191, D244, S254, R255, and N256 together coordinate sn-glycerol 3-phosphate. The Proton acceptor role is filled by K191. R255 is a binding site for NADPH. V279 and E281 together coordinate NADPH.

It belongs to the NAD-dependent glycerol-3-phosphate dehydrogenase family.

Its subcellular location is the cytoplasm. The catalysed reaction is sn-glycerol 3-phosphate + NAD(+) = dihydroxyacetone phosphate + NADH + H(+). The enzyme catalyses sn-glycerol 3-phosphate + NADP(+) = dihydroxyacetone phosphate + NADPH + H(+). Its pathway is membrane lipid metabolism; glycerophospholipid metabolism. Functionally, catalyzes the reduction of the glycolytic intermediate dihydroxyacetone phosphate (DHAP) to sn-glycerol 3-phosphate (G3P), the key precursor for phospholipid synthesis. This chain is Glycerol-3-phosphate dehydrogenase [NAD(P)+], found in Pseudomonas syringae pv. tomato (strain ATCC BAA-871 / DC3000).